A 164-amino-acid chain; its full sequence is UPF0304 protein PM1500 (164 aa).

It belongs to the UPF0304 family.

This chain is UPF0304 protein PM1500, found in Pasteurella multocida (strain Pm70).